A 315-amino-acid polypeptide reads, in one-letter code: Ribosomal RNA small subunit methyltransferase H (315 aa).

Residues 35 to 37 (AGH), Asp55, Phe84, Asp105, and Gln112 contribute to the S-adenosyl-L-methionine site.

Belongs to the methyltransferase superfamily. RsmH family.

The protein localises to the cytoplasm. It catalyses the reaction cytidine(1402) in 16S rRNA + S-adenosyl-L-methionine = N(4)-methylcytidine(1402) in 16S rRNA + S-adenosyl-L-homocysteine + H(+). In terms of biological role, specifically methylates the N4 position of cytidine in position 1402 (C1402) of 16S rRNA. In Streptococcus agalactiae serotype III (strain NEM316), this protein is Ribosomal RNA small subunit methyltransferase H.